The following is a 599-amino-acid chain: Putative ATP-dependent helicase YeeB (599 aa).

A Helicase ATP-binding domain is found at 30-207; sequence AFEKRNSQYL…LLPEDEELFD (178 aa). 43-50 serves as a coordination point for ATP; it reads APPASGKS. The DEAH box signature appears at 154–157; sequence DEFH. Residues 236–408 form the Helicase C-terminal domain; it reads QYTSAINEVL…TVNTMLKAIS (173 aa).

The protein belongs to the helicase family.

This chain is Putative ATP-dependent helicase YeeB (yeeB), found in Bacillus subtilis (strain 168).